Here is a 345-residue protein sequence, read N- to C-terminus: Anthranilate phosphoribosyltransferase (345 aa).

5-phospho-alpha-D-ribose 1-diphosphate contacts are provided by residues glycine 87, 90-91 (GD), threonine 95, 97-100 (NAST), 115-123 (KHGNRSFSS), and serine 127. Glycine 87 is an anthranilate binding site. Serine 99 is a Mg(2+) binding site. Asparagine 118 contacts anthranilate. Anthranilate is bound at residue arginine 173. Positions 232 and 233 each coordinate Mg(2+).

This sequence belongs to the anthranilate phosphoribosyltransferase family. In terms of assembly, homodimer. Mg(2+) is required as a cofactor.

It catalyses the reaction N-(5-phospho-beta-D-ribosyl)anthranilate + diphosphate = 5-phospho-alpha-D-ribose 1-diphosphate + anthranilate. The protein operates within amino-acid biosynthesis; L-tryptophan biosynthesis; L-tryptophan from chorismate: step 2/5. In terms of biological role, catalyzes the transfer of the phosphoribosyl group of 5-phosphorylribose-1-pyrophosphate (PRPP) to anthranilate to yield N-(5'-phosphoribosyl)-anthranilate (PRA). The sequence is that of Anthranilate phosphoribosyltransferase from Aeropyrum pernix (strain ATCC 700893 / DSM 11879 / JCM 9820 / NBRC 100138 / K1).